The following is a 196-amino-acid chain: Nucleoside triphosphate pyrophosphatase (196 aa).

Asp73 (proton acceptor) is an active-site residue.

The protein belongs to the Maf family. A divalent metal cation serves as cofactor.

It localises to the cytoplasm. The catalysed reaction is a ribonucleoside 5'-triphosphate + H2O = a ribonucleoside 5'-phosphate + diphosphate + H(+). It catalyses the reaction a 2'-deoxyribonucleoside 5'-triphosphate + H2O = a 2'-deoxyribonucleoside 5'-phosphate + diphosphate + H(+). Its function is as follows. Nucleoside triphosphate pyrophosphatase. May have a dual role in cell division arrest and in preventing the incorporation of modified nucleotides into cellular nucleic acids. The protein is Nucleoside triphosphate pyrophosphatase of Anaplasma marginale (strain St. Maries).